The sequence spans 693 residues: Golgin subfamily A member 6A (693 aa).

Residues 14 to 611 (LEESRQNKLA…KLLELQELVL (598 aa)) adopt a coiled-coil conformation. Disordered regions lie at residues 20–69 (NKLA…PGDS), 497–547 (LPGE…GTEQ), and 661–693 (NVEP…MQDT). Positions 54–69 (SPETTTSGGCHSPGDS) are enriched in polar residues. Over residues 537-547 (LPKEKADGTEQ) the composition is skewed to basic and acidic residues. Residues 676-693 (DNPTVQQIVQLSPVMQDT) are compositionally biased toward polar residues.

The protein belongs to the GOLGA6 family. As to expression, highly expressed in seminiferous tubes in testis. Highly expressed in spermatids, barely detectable in late pachytene spermatocytes, and not detectable in spermatogonia. Detected at intermediate levels in pancreas and lymph nodes, and at much lower levels in spleen, peripheral blood leukocytes, skeletal muscle, liver, lung, placenta, brain and heart.

The protein is Golgin subfamily A member 6A (GOLGA6A) of Homo sapiens (Human).